Here is a 132-residue protein sequence, read N- to C-terminus: Small ribosomal subunit protein uS8 (132 aa).

This sequence belongs to the universal ribosomal protein uS8 family. Part of the 30S ribosomal subunit. Contacts proteins S5 and S12.

One of the primary rRNA binding proteins, it binds directly to 16S rRNA central domain where it helps coordinate assembly of the platform of the 30S subunit. The chain is Small ribosomal subunit protein uS8 from Psychrobacter sp. (strain PRwf-1).